Reading from the N-terminus, the 260-residue chain is Transmembrane protein 106C (260 aa).

Gly-2 carries the N-myristoyl glycine lipid modification. A helical membrane pass occupies residues 85–105 (YVLLSVLLCLLASGLVFFFLF). A glycan (N-linked (GlcNAc...) asparagine) is linked at Asn-171. Residues 196–216 (SYVYFYCTLPAILVHNIVIFM) traverse the membrane as a helical segment.

Belongs to the TMEM106 family. In terms of assembly, interacts with TMEM106B.

It localises to the endoplasmic reticulum membrane. It is found in the membrane. This Rattus norvegicus (Rat) protein is Transmembrane protein 106C (Tmem106c).